The primary structure comprises 192 residues: Flavin prenyltransferase UbiX (192 aa).

Residues 10 to 12 (GAS), S36, 92 to 95 (SVAT), and R127 contribute to the FMN site. Dimethylallyl phosphate-binding residues include Y157 and K173.

It belongs to the UbiX/PAD1 family.

It carries out the reaction dimethylallyl phosphate + FMNH2 = prenylated FMNH2 + phosphate. Its function is as follows. Flavin prenyltransferase that catalyzes the synthesis of the prenylated FMN cofactor (prenyl-FMN) for 4-hydroxy-3-polyprenylbenzoic acid decarboxylase UbiD. The prenyltransferase is metal-independent and links a dimethylallyl moiety from dimethylallyl monophosphate (DMAP) to the flavin N5 and C6 atoms of FMN. In Chlamydia muridarum (strain MoPn / Nigg), this protein is Flavin prenyltransferase UbiX.